Here is a 78-residue protein sequence, read N- to C-terminus: DNA-directed RNA polymerase subunit Rpo5 (78 aa).

Belongs to the archaeal Rpo5/eukaryotic RPB5 RNA polymerase subunit family. As to quaternary structure, part of the RNA polymerase complex.

It localises to the cytoplasm. It carries out the reaction RNA(n) + a ribonucleoside 5'-triphosphate = RNA(n+1) + diphosphate. Its function is as follows. DNA-dependent RNA polymerase (RNAP) catalyzes the transcription of DNA into RNA using the four ribonucleoside triphosphates as substrates. The chain is DNA-directed RNA polymerase subunit Rpo5 from Methanococcoides burtonii (strain DSM 6242 / NBRC 107633 / OCM 468 / ACE-M).